Consider the following 714-residue polypeptide: MELGKAKLLRTGLNTLHQAIHPVHGIAWTDGKQVCLTSLFSVEGEPKFGDTNVIGQFEHVLGLFWGPLCCSGSPALLAVQHKKHVTVWQLQLSALEQNKLLCTQTCEMSEPFPLLSQGCVWHPKMDVLAILTKRDASVLFSVRVDNRRVKADIKGSGLIHCACWTKDGTRLVVAIGSALHSYTWNDIQKSLVPCSFCPIFDVGGYICAIESTDEAQVAVATELPLDKICGLNAGMAFDLPNESEGLCRPSAALTVDTDYYLDRRRSCDSERSGHASSGPIDLTNLLAKHRKSDPSPLIHLRKRDNLTGTGQDSSHLILVTYERKVTTTRKVSIPGILVPDIIAFDPNGHTVAVASNTCNMILVYCITDSSMPNVQQIQLQKNERPKGVCFFTNKMLLFMIGRQKSNDPAFLPSSNTDKYILRLTAKELVFDEESTTKSESPSQHHGIRRHSENFTKEDRLSIKDLILPGGSVIVSPSSRRKLIEEVRSSDLSPVASSADFSDRASSASSVTLENYDMDHITRMASLAVAGQASRDSSRPCSPRYETSEKLYSDATPPKNSKEKNLEQLTQNMERIFTRFAEVQQCLSEIREFTQNGKKIACSYPSAYEPQYVHITCQKQLSENVYTDERRPLLLCGGRICLRVVQELFGLTVVEMMHGPMWITLVADADGFVPLTFKHKDELTIRSARRKSPARPPSGADDFPPESPKSPSMEK.

2 WD repeats span residues glycine 55 to asparagine 98 and lysine 154 to cysteine 194. Disordered stretches follow at residues glutamate 432–phenylalanine 454 and glutamine 531–asparagine 564. A coiled-coil region spans residues glutamine 567–asparagine 595. A disordered region spans residues arginine 685–lysine 714.

In Danio rerio (Zebrafish), this protein is WD repeat and coiled-coil-containing protein (wdcp).